Reading from the N-terminus, the 494-residue chain is Beta-glucosidase 29 (494 aa).

The first 28 residues, M1–A28, serve as a signal peptide directing secretion. Q49 contributes to the a beta-D-glucoside binding site. N103 carries N-linked (GlcNAc...) asparagine glycosylation. Residues H138 and N183–E184 contribute to the a beta-D-glucoside site. E184 serves as the catalytic Proton donor. C203 and C211 are disulfide-bonded. Residue N263 is glycosylated (N-linked (GlcNAc...) asparagine). Residue Y327 participates in a beta-D-glucoside binding. An N-linked (GlcNAc...) asparagine glycan is attached at N352. E398 is a binding site for a beta-D-glucoside. The Nucleophile role is filled by E398. N406 is a glycosylation site (N-linked (GlcNAc...) asparagine). A beta-D-glucoside-binding positions include W447, E454–W455, and F463.

The protein belongs to the glycosyl hydrolase 1 family.

It carries out the reaction Hydrolysis of terminal, non-reducing beta-D-glucosyl residues with release of beta-D-glucose.. The sequence is that of Beta-glucosidase 29 (BGLU29) from Oryza sativa subsp. japonica (Rice).